A 344-amino-acid chain; its full sequence is Follistatin (344 aa).

Residues 1-29 form the signal peptide; that stretch reads MVRARHQPGGLCLLLLLLCQFMEDRSAQA. Positions 30 to 103 constitute a TB domain; sequence GNCWLRQAKN…TCENVDCGPG (74 aa). Intrachain disulfides connect C32–C55, C42–C88, C56–C91, C95–C106, C100–C116, C118–C150, C122–C143, C132–C164, C168–C179, C173–C189, C192–C225, C196–C218, C207–C239, C245–C256, C250–C267, C270–C302, C274–C295, and C284–C316. The 24-residue stretch at 94–117 folds into the Follistatin-like 1 domain; sequence TCENVDCGPGKKCRMNKKNKPRCV. Positions 112 to 166 constitute a Kazal-like 1 domain; the sequence is NKPRCVCAPDCSNITWKGPVCGLDGKTYRNECALLKARCKEQPELEVQYQGRCKK. The N-linked (GlcNAc...) asparagine glycan is linked to N124. Residues 167–190 form the Follistatin-like 2 domain; it reads TCRDVFCPGSSTCVVDQTNNAYCV. Positions 186–241 constitute a Kazal-like 2 domain; it reads NAYCVTCNRICPEPASSEQYLCGNDGVTYSSACHLRKATCLLGRSIGLAYEGKCIK. Residues 244-268 form the Follistatin-like 3 domain; the sequence is SCEDIQCTGGKKCLWDFKVGRGRCS. Residues 264-318 enclose the Kazal-like 3 domain; sequence RGRCSLCDELCPDSKSDEPVCASDNATYASECAMKEAACSSGVLLEVKHSGSCNS. N288 carries an N-linked (GlcNAc...) asparagine glycan. Residues 314-344 form a disordered region; that stretch reads GSCNSISEDTEEEEEDEDQDYSFPISSILEW. Positions 321–333 are enriched in acidic residues; it reads EDTEEEEEDEDQD.

Interacts with GDF11. Interacts with activin A/INHBA. Interacts with MYOSTATIN/MSTN. In terms of tissue distribution, isoform 1 is the predominant isoform in serum but is undetectable in follicular fluid. In the embryo, strong expression is seen in the palatal epithelia, including the medial edge epithelial and midline epithelial seam of the palatal shelves. Less pronounced expression is also seen throughout the palatal shelf and tongue mesenchyme.

The protein resides in the secreted. The protein localises to the nucleus. It is found in the nucleolus. In terms of biological role, multifunctional regulatory protein whose primary function is to antagonize members of the transforming growth factor beta (TGF-beta) superfamily including activin, myostatin, GDF11 or bone morphogenetic proteins (BMPs). Mechanistically, binds to these ligands in the extracellular space, blocking their type II receptor-binding site to inhibit downstream signaling. Plays an essential role in muscle fiber formation and growth both by preventing the repressive effects of myostatin and through SMAD3/AKT/mTOR signaling independently of myostatin. Also promotes neural differentiation by antagonizing the action BMP4. Acts as a specific inhibitor of the biosynthesis and secretion of pituitary follicle stimulating hormone (FSH) by sequestering activin A/INHBA. On the other hand, translocates into the nucleus where it down-regulates rRNA synthesis and ribosome biogenesis to maintain cellular energy homeostasis by binding to rDNA. This is Follistatin from Homo sapiens (Human).